The chain runs to 617 residues: Proline--tRNA ligase (617 aa).

The protein belongs to the class-II aminoacyl-tRNA synthetase family. ProS type 1 subfamily. Homodimer.

Its subcellular location is the cytoplasm. It catalyses the reaction tRNA(Pro) + L-proline + ATP = L-prolyl-tRNA(Pro) + AMP + diphosphate. Its function is as follows. Catalyzes the attachment of proline to tRNA(Pro) in a two-step reaction: proline is first activated by ATP to form Pro-AMP and then transferred to the acceptor end of tRNA(Pro). As ProRS can inadvertently accommodate and process non-cognate amino acids such as alanine and cysteine, to avoid such errors it has two additional distinct editing activities against alanine. One activity is designated as 'pretransfer' editing and involves the tRNA(Pro)-independent hydrolysis of activated Ala-AMP. The other activity is designated 'posttransfer' editing and involves deacylation of mischarged Ala-tRNA(Pro). The misacylated Cys-tRNA(Pro) is not edited by ProRS. This chain is Proline--tRNA ligase, found in Streptococcus agalactiae serotype V (strain ATCC BAA-611 / 2603 V/R).